The chain runs to 29 residues: Lambda-theraphotoxin-Ec2c (29 aa).

Disulfide bonds link C2–C16, C9–C21, and C15–C25.

This sequence belongs to the neurotoxin 30 (phrixotoxin) family. In terms of tissue distribution, expressed by the venom gland.

It is found in the secreted. In terms of biological role, both insecticidal and vertebrate neurotoxin that potently blocks insect calcium-activated potassium (BKCa) channels (Slo-type) in cockroach dorsal unpaired median (DUM) neurons (IC(50)=24.6 nM). This occurs in the absence of any shifts in the voltage dependence of activation. May interact with the turret and/or loop region of the external entrance to the channel and does not project deeply into the pore of the channel. Also shows toxicity to mice by introcerebroventicular injection. This Eucratoscelus constrictus (African red-rump baboon spider) protein is Lambda-theraphotoxin-Ec2c.